The chain runs to 423 residues: Flavohemoprotein B (423 aa).

The region spanning 1–136 (MLSQKSIQII…VAQAFMDAEE (136 aa)) is the Globin domain. Residue His-83 coordinates heme b. Residues Tyr-93 and Glu-135 each act as charge relay system in the active site. The tract at residues 149–423 (WKDTREFVVD…LRGVKNIIEN (275 aa)) is reductase. The region spanning 150–268 (KDTREFVVDR…SVPAGDFVVN (119 aa)) is the FAD-binding FR-type domain. Residues Tyr-188 and 212 to 215 (RHYS) contribute to the FAD site. 281 to 286 (GVGINP) provides a ligand contact to NADP(+). FAD is bound at residue 400–403 (LFGP).

It belongs to the globin family. Two-domain flavohemoproteins subfamily. In the C-terminal section; belongs to the flavoprotein pyridine nucleotide cytochrome reductase family. FAD is required as a cofactor. It depends on heme b as a cofactor.

The protein localises to the cytoplasm. It catalyses the reaction 2 nitric oxide + NADPH + 2 O2 = 2 nitrate + NADP(+) + H(+). The catalysed reaction is 2 nitric oxide + NADH + 2 O2 = 2 nitrate + NAD(+) + H(+). Functionally, is involved in NO detoxification in an aerobic process, termed nitric oxide dioxygenase (NOD) reaction that utilizes O(2) and NAD(P)H to convert NO to nitrate, which protects the cell from various noxious nitrogen compounds. Therefore, plays a central role in the inducible response to nitrosative stress. Its function is as follows. In the presence of oxygen and NADH, it has NADH oxidase activity, which leads to the generation of superoxide and H(2)O(2). Under anaerobic conditions, it also exhibits nitric oxide reductase and FAD reductase activities. However, all these reactions are much lower than NOD activity. The polypeptide is Flavohemoprotein B (fhbB) (Dictyostelium discoideum (Social amoeba)).